The following is a 285-amino-acid chain: Probable adenylate kinase 6, chloroplastic (285 aa).

The transit peptide at 1 to 33 (MAAISRAIRACAAAGSRRSMASSAKEVAAAGAR) directs the protein to the chloroplast. An ATP-binding site is contributed by 63–68 (GVGKGT). Positions 83 to 112 (ATGDLVRDALASPGPFSEQLAEIVNNGKLV) are NMP. AMP contacts are provided by residues Thr-84, Arg-89, 110–112 (KLV), 140–143 (GFPR), and Gln-147. The tract at residues 176-224 (GRRMCSQCGGNFNVASIDMEGENGGPRMYMPPLLPPPQCESKLITRPDD) is LID. ATP-binding positions include Arg-177 and 186-187 (NF). Residues Arg-221 and Arg-232 each coordinate AMP.

This sequence belongs to the adenylate kinase family.

The protein resides in the plastid. The protein localises to the chloroplast. It carries out the reaction AMP + ATP = 2 ADP. Catalyzes the reversible transfer of the terminal phosphate group between ATP and AMP. Plays an important role in cellular energy homeostasis and in adenine nucleotide metabolism. The chain is Probable adenylate kinase 6, chloroplastic from Oryza sativa subsp. japonica (Rice).